The chain runs to 784 residues: Toll-like receptor 2 (784 aa).

The first 20 residues, 1 to 20 (MPRALWTAWVWAVIILSTEG), serve as a signal peptide directing secretion. Topologically, residues 21 to 587 (ASDQASSLSC…ARLSLSECHR (567 aa)) are extracellular. Cys30 and Cys36 are oxidised to a cystine. LRR repeat units follow at residues 54 to 77 (VKSL…RCVN), 78 to 101 (LKTL…HLRN), 102 to 125 (LEYL…SLYV), 126 to 150 (LKFL…HLPN), 151 to 175 (LRTL…GLTF), 176 to 199 (LEEL…SIQN), 200 to 223 (ISHL…IVSS), 224 to 250 (LDCL…MSTS), 251 to 278 (VKKL…YVSG), 279 to 308 (ILEV…HLGN), 309 to 337 (VETL…LTGK), 338 to 361 (VKRV…HLKS), 362 to 388 (LEYL…AWPF), 389 to 414 (LQTL…TLEN), 415 to 437 (LNSL…WPGK), 438 to 457 (MKQL…CLPQ), 458 to 478 (TLEI…ILPQ), 479 to 500 (LKEL…FLPV), and 501 to 524 (LXVM…SFQQ). Asn114 carries an N-linked (GlcNAc...) asparagine glycan. Asn199 carries an N-linked (GlcNAc...) asparagine glycan. Cys353 and Cys382 are oxidised to a cystine. The cysteines at positions 432 and 454 are disulfide-linked. Asn442 is a glycosylation site (N-linked (GlcNAc...) asparagine). One can recognise an LRRCT domain in the interval 525-579 (LKTLEAGGNNFICSCDFLSFTQGQQALGRVLVDWPDDYHCDSPSHVRGQRVQDAR). The chain crosses the membrane as a helical span at residues 588–608 (AAVVSAACCALFLLLLLMGVL). The Cytoplasmic segment spans residues 609–784 (CHRFHGLWYM…WLNLRAAIRS (176 aa)). The region spanning 639 to 782 (ICYDAFVSYS…GFWLNLRAAI (144 aa)) is the TIR domain. Lys754 is covalently cross-linked (Glycyl lysine isopeptide (Lys-Gly) (interchain with G-Cter in ubiquitin)). The ATG16L1-binding motif signature appears at 761-778 (YLEWPVDETQQEGFWLNL).

It belongs to the Toll-like receptor family. Interacts with LY96, TLR1 and TLR6 (via extracellular domain). TLR2 seems to exist in heterodimers with either TLR1 or TLR6 before stimulation by the ligand. The heterodimers form bigger oligomers in response to their corresponding ligands as well as further heterotypic associations with other receptors such as CD14 and/or CD36. Binds MYD88 (via TIR domain). Interacts with TICAM1. Interacts with CNPY3. Interacts with ATG16L1. Interacts with PPP1R11. Interacts with TICAM2. Interacts with TIRAP. Post-translationally, ubiquitinated at Lys-754 by PPP1R11, leading to its degradation. Deubiquitinated by USP2. Glycosylation of Asn-442 is critical for secretion of the N-terminal ectodomain of TLR2.

The protein localises to the membrane. It localises to the cytoplasmic vesicle. It is found in the phagosome membrane. The protein resides in the membrane raft. Its function is as follows. Cooperates with LY96 to mediate the innate immune response to bacterial lipoproteins and other microbial cell wall components. Cooperates with TLR1 or TLR6 to mediate the innate immune response to bacterial lipoproteins or lipopeptides. Acts via MYD88 and TRAF6, leading to NF-kappa-B activation, cytokine secretion and the inflammatory response. May also promote apoptosis in response to lipoproteins. Forms activation clusters composed of several receptors depending on the ligand, these clusters trigger signaling from the cell surface and subsequently are targeted to the Golgi in a lipid-raft dependent pathway. Forms the cluster TLR2:TLR6:CD14:CD36 in response to diacylated lipopeptides and TLR2:TLR1:CD14 in response to triacylated lipopeptides. In Bos indicus (Zebu), this protein is Toll-like receptor 2 (TLR2).